A 477-amino-acid chain; its full sequence is MQRFAAKRSVQNISVSLWRRCISSTSQAATASVKDSDEFQARLPPFAYTPPPYTGPSADVILSKRKEFLSPSMFCLYRKPLNIVDGKMQYLFDESGRRYLDAFAGIAVVNCGHCHPDVVEPVINQIKRLQHPTVLYLNHAIADFSEALASKLPGDLKVVFFTNSGTEANELALMMAKLYTGCQDIVAVRNGYHGNAAATMGATGQSMWKFNVVQNSVHHALNPDPYRGVFGSDGEKYAKDLQDLIQYGTTGHIAGFICEAIQGVGGIVELAPGYLSAAYDTVKKAGGLFIADEVQSGFARTGNFWGFEAHNVVPDIVTMAKGIGNGFPLGAVVTTPEIAGVLTRRSYFNTFGGNSVSTTAGLAVLNVIEKEKLQENAAMVGSYLKEKLTQLKEKHEIIGDVRGRGLMLGVELVSDRKLKTPATAETLHIMDQMKELGVLIGKGGYFGNVFRITPPLCFTKDDADFLVEAMDYSMSKM.

The N-terminal 22 residues, 1-22, are a transit peptide targeting the mitochondrion; the sequence is MQRFAAKRSVQNISVSLWRRCI. Pyridoxal 5'-phosphate-binding positions include 165-166, Tyr192, and 292-295; these read GT and DEVQ. The residue at position 321 (Lys321) is an N6-(pyridoxal phosphate)lysine. Thr350 contributes to the pyridoxal 5'-phosphate binding site.

This sequence belongs to the class-III pyridoxal-phosphate-dependent aminotransferase family. Homotetramer. Interacts with GRF3. Pyridoxal 5'-phosphate serves as cofactor.

The protein localises to the mitochondrion. It catalyses the reaction glyoxylate + L-alanine = glycine + pyruvate. In Arabidopsis thaliana (Mouse-ear cress), this protein is Alanine--glyoxylate aminotransferase 2 homolog 2, mitochondrial (AGT3).